Consider the following 222-residue polypeptide: Beta-casein (222 aa).

The N-terminal stretch at 1–15 (MKVLILACLVALALA) is a signal peptide. The residue at position 27 (T27) is a Phosphothreonine. S30, S32, S33, and S34 each carry phosphoserine.

The protein belongs to the beta-casein family. As to expression, mammary gland specific. Secreted in milk.

It localises to the secreted. Its function is as follows. Important role in determination of the surface properties of the casein micelles. The polypeptide is Beta-casein (CSN2) (Ovis aries (Sheep)).